Consider the following 162-residue polypeptide: Peptidyl-prolyl cis-trans isomerase (162 aa).

S2 is modified (N-acetylserine). One can recognise a PPIase cyclophilin-type domain in the interval 5-161 (YFDVEADGQP…ARIVVAKSGE (157 aa)). Residues K29 and K42 each participate in a glycyl lysine isopeptide (Lys-Gly) (interchain with G-Cter in ubiquitin) cross-link. Position 71 is a phosphothreonine (T71). Residues K123 and K139 each participate in a glycyl lysine isopeptide (Lys-Gly) (interchain with G-Cter in ubiquitin) cross-link. Residues S142 and S145 each carry the phosphoserine modification. Residues K151 and K158 each participate in a glycyl lysine isopeptide (Lys-Gly) (interchain with G-Cter in ubiquitin) cross-link.

The protein belongs to the cyclophilin-type PPIase family. PPIase A subfamily. As to quaternary structure, interacts with a complex composed of SIN3 and RPD3. Identified in the Set3C complex with HOS2, HST1, SNT1, SIF2, HOS4/YIL112W and SET3.

The protein localises to the cytoplasm. The protein resides in the nucleus. It localises to the mitochondrion intermembrane space. The enzyme catalyses [protein]-peptidylproline (omega=180) = [protein]-peptidylproline (omega=0). With respect to regulation, binds cyclosporin A (CsA). CsA mediates some of its effects via an inhibitory action on PPIase. PPIases accelerate the folding of proteins. It catalyzes the cis-trans isomerization of proline imidic peptide bonds in oligopeptides. Involved in histone deacetylase complexes, suggesting a function in chromatin. Imports fructose-1,6-bisphosphatase (FBPase) into the intermediate vacuole import and degradation (Vid) vesicles. Regulates the meiotic gene program via the Set3C histone deacetylase complex to promote efficient sporulation, and the prolyl-isomerase activity is required for this function. The sequence is that of Peptidyl-prolyl cis-trans isomerase (CPR1) from Saccharomyces cerevisiae (strain ATCC 204508 / S288c) (Baker's yeast).